We begin with the raw amino-acid sequence, 403 residues long: Argininosuccinate synthase (403 aa).

Residues 10–18 and Ala-38 contribute to the ATP site; that span reads AYSGGVDTS. Tyr-89 provides a ligand contact to L-citrulline. Gly-119 contributes to the ATP binding site. Positions 121, 125, and 126 each coordinate L-aspartate. Asn-125 lines the L-citrulline pocket. 5 residues coordinate L-citrulline: Arg-129, Ser-177, Ser-186, Glu-262, and Tyr-274.

The protein belongs to the argininosuccinate synthase family. Type 1 subfamily. In terms of assembly, homotetramer.

It is found in the cytoplasm. It carries out the reaction L-citrulline + L-aspartate + ATP = 2-(N(omega)-L-arginino)succinate + AMP + diphosphate + H(+). It functions in the pathway amino-acid biosynthesis; L-arginine biosynthesis; L-arginine from L-ornithine and carbamoyl phosphate: step 2/3. The protein is Argininosuccinate synthase of Synechococcus sp. (strain CC9902).